The sequence spans 412 residues: uncharacterized protein (412 aa).

Histidine 49 contributes to the Zn(2+) binding site. The Proton acceptor role is filled by glutamate 52. Residues histidine 53 and glutamate 129 each coordinate Zn(2+).

Belongs to the peptidase M16 family. Zn(2+) serves as cofactor.

This is an uncharacterized protein from Rickettsia bellii (strain RML369-C).